The following is a 274-amino-acid chain: MDLLLVIKAIIMGIVEGITELLPISSTGHLILAADVMNFLSHDKRVVFEIFIQMGAMLAIVWEYRVKIFSSLAGAVRPGIERNLFINVAIAFFPAALVGFLFSDFIRTVLFSPYVVAGGFIVGGVIIMWVEKYAYAPRLDDMDRISYADAFNVGLCQCLALIPGTSRSGATIIGGMYFGLSRRASTEFSFFLAIPMIGAASLYALWEAREQMEIEDMGILAIGFITSFFVTFAVMRALLRFVSKHTYMAFAWYRIAFGLLVLATAYTGVINWSV.

8 helical membrane passes run 4–24 (LLVI…LLPI), 46–66 (VVFE…EYRV), 86–106 (INVA…SDFI), 109–129 (VLFS…IIMW), 145–165 (ISYA…IPGT), 188–208 (FSFF…LWEA), 214–234 (IEDM…TFAV), and 250–270 (FAWY…TGVI).

The protein belongs to the UppP family.

The protein localises to the cell inner membrane. It catalyses the reaction di-trans,octa-cis-undecaprenyl diphosphate + H2O = di-trans,octa-cis-undecaprenyl phosphate + phosphate + H(+). Catalyzes the dephosphorylation of undecaprenyl diphosphate (UPP). Confers resistance to bacitracin. This Cellvibrio japonicus (strain Ueda107) (Pseudomonas fluorescens subsp. cellulosa) protein is Undecaprenyl-diphosphatase.